The sequence spans 313 residues: Pyrimidine-specific ribonucleoside hydrolase RihB (313 aa).

The Proton acceptor role is filled by D11. Ca(2+) contacts are provided by D11, D16, and V124. The substrate site is built by Q227 and H239. Ca(2+) is bound at residue D240.

Belongs to the IUNH family. RihB subfamily. In terms of assembly, homotetramer. Requires Ca(2+) as cofactor.

It catalyses the reaction a pyrimidine ribonucleoside + H2O = a pyrimidine nucleobase + D-ribose. Functionally, hydrolyzes cytidine or uridine to ribose and cytosine or uracil, respectively. Has a clear preference for cytidine over uridine. Strictly specific for ribonucleosides. The sequence is that of Pyrimidine-specific ribonucleoside hydrolase RihB from Escherichia coli (strain K12 / DH10B).